Here is a 935-residue protein sequence, read N- to C-terminus: Isoleucine--tRNA ligase (935 aa).

The 'HIGH' region signature appears at 58-68 (PYANGNLHLGH). Glutamate 559 contributes to the L-isoleucyl-5'-AMP binding site. Positions 600–604 (KMSKS) match the 'KMSKS' region motif. Lysine 603 contacts ATP. Zn(2+) is bound by residues cysteine 898, cysteine 901, cysteine 918, and cysteine 921.

The protein belongs to the class-I aminoacyl-tRNA synthetase family. IleS type 1 subfamily. As to quaternary structure, monomer. It depends on Zn(2+) as a cofactor.

The protein resides in the cytoplasm. The enzyme catalyses tRNA(Ile) + L-isoleucine + ATP = L-isoleucyl-tRNA(Ile) + AMP + diphosphate. Functionally, catalyzes the attachment of isoleucine to tRNA(Ile). As IleRS can inadvertently accommodate and process structurally similar amino acids such as valine, to avoid such errors it has two additional distinct tRNA(Ile)-dependent editing activities. One activity is designated as 'pretransfer' editing and involves the hydrolysis of activated Val-AMP. The other activity is designated 'posttransfer' editing and involves deacylation of mischarged Val-tRNA(Ile). The protein is Isoleucine--tRNA ligase of Haemophilus ducreyi (strain 35000HP / ATCC 700724).